A 624-amino-acid polypeptide reads, in one-letter code: Protein NRT1/ PTR FAMILY 6.1 (624 aa).

The interval 1–20 (MVASEIKSPVSVPETPGSSS) is disordered. 2 helical membrane passes run 83 to 100 (MAYFGLSVNMVAFMFYVM) and 114 to 134 (FLGISQASSVLGGFLADAYLG). Position 138 is a phosphothreonine (T138). The next 10 membrane-spanning stretches (helical) occupy residues 139–159 (IAIFTTMYLVGLIGITLGASL), 184–204 (SWQMLYLYTVLYITGFGAAGI), 230–250 (FFNFFYLSVTLGAIIAFTLVV), 258–278 (WGMAFGTLAVAMGISNALFFA), 378–398 (LIPIPTCTIMLSLVLTEYLTL), 422–442 (VFPGLSIFLILSLYYSVFVPI), 459–479 (VGIGLAVSIISVAWAGLFENY), 504–524 (WLLIQYCLIGIAEVFCIVGLL), 537–557 (SIGSAYAALAGGLGCFAATIL), and 585–605 (CLYWLLTLLSFLNFCVFLWSA).

The protein belongs to the major facilitator superfamily. Proton-dependent oligopeptide transporter (POT/PTR) (TC 2.A.17) family. Expressed in flower and siliques.

It is found in the membrane. The polypeptide is Protein NRT1/ PTR FAMILY 6.1 (NPF6.1) (Arabidopsis thaliana (Mouse-ear cress)).